Here is a 501-residue protein sequence, read N- to C-terminus: Lysine--tRNA ligase (501 aa).

Mg(2+) is bound by residues glutamate 404 and glutamate 411.

This sequence belongs to the class-II aminoacyl-tRNA synthetase family. As to quaternary structure, homodimer. It depends on Mg(2+) as a cofactor.

Its subcellular location is the cytoplasm. The catalysed reaction is tRNA(Lys) + L-lysine + ATP = L-lysyl-tRNA(Lys) + AMP + diphosphate. This is Lysine--tRNA ligase from Campylobacter jejuni subsp. doylei (strain ATCC BAA-1458 / RM4099 / 269.97).